A 490-amino-acid chain; its full sequence is ATP synthase subunit beta (490 aa).

Residue 173–180 participates in ATP binding; sequence GGAGVGKT.

Belongs to the ATPase alpha/beta chains family. As to quaternary structure, F-type ATPases have 2 components, CF(1) - the catalytic core - and CF(0) - the membrane proton channel. CF(1) has five subunits: alpha(3), beta(3), gamma(1), delta(1), epsilon(1). CF(0) has three main subunits: a(1), b(2) and c(9-12). The alpha and beta chains form an alternating ring which encloses part of the gamma chain. CF(1) is attached to CF(0) by a central stalk formed by the gamma and epsilon chains, while a peripheral stalk is formed by the delta and b chains.

The protein localises to the cell membrane. The catalysed reaction is ATP + H2O + 4 H(+)(in) = ADP + phosphate + 5 H(+)(out). Its function is as follows. Produces ATP from ADP in the presence of a proton gradient across the membrane. The catalytic sites are hosted primarily by the beta subunits. The polypeptide is ATP synthase subunit beta (Bifidobacterium longum (strain DJO10A)).